The following is a 159-amino-acid chain: 6,7-dimethyl-8-ribityllumazine synthase (159 aa).

5-amino-6-(D-ribitylamino)uracil-binding positions include W26, 57–59 (ALE), and 79–81 (CVI). 84–85 (GT) contacts (2S)-2-hydroxy-3-oxobutyl phosphate. The active-site Proton donor is H87. Residue N112 participates in 5-amino-6-(D-ribitylamino)uracil binding. R126 serves as a coordination point for (2S)-2-hydroxy-3-oxobutyl phosphate.

This sequence belongs to the DMRL synthase family.

The enzyme catalyses (2S)-2-hydroxy-3-oxobutyl phosphate + 5-amino-6-(D-ribitylamino)uracil = 6,7-dimethyl-8-(1-D-ribityl)lumazine + phosphate + 2 H2O + H(+). Its pathway is cofactor biosynthesis; riboflavin biosynthesis; riboflavin from 2-hydroxy-3-oxobutyl phosphate and 5-amino-6-(D-ribitylamino)uracil: step 1/2. In terms of biological role, catalyzes the formation of 6,7-dimethyl-8-ribityllumazine by condensation of 5-amino-6-(D-ribitylamino)uracil with 3,4-dihydroxy-2-butanone 4-phosphate. This is the penultimate step in the biosynthesis of riboflavin. The sequence is that of 6,7-dimethyl-8-ribityllumazine synthase from Corynebacterium efficiens (strain DSM 44549 / YS-314 / AJ 12310 / JCM 11189 / NBRC 100395).